A 214-amino-acid polypeptide reads, in one-letter code: Hypoxanthine-guanine phosphoribosyltransferase (214 aa).

Alanine 2 carries the post-translational modification N-acetylalanine. Lysine 69 serves as a coordination point for GMP. Lysine 103 bears the N6-acetyllysine mark. Lysine 115 is covalently cross-linked (Glycyl lysine isopeptide (Lys-Gly) (interchain with G-Cter in SUMO1); alternate). Lysine 115 is covalently cross-linked (Glycyl lysine isopeptide (Lys-Gly) (interchain with G-Cter in SUMO2); alternate). GMP is bound by residues 134-142 (EDIIDTGKT), lysine 166, 186-188 (KFV), and aspartate 194. The active-site Proton acceptor is the aspartate 138. Threonine 142 bears the Phosphothreonine mark. Mg(2+) is bound at residue aspartate 194.

The protein belongs to the purine/pyrimidine phosphoribosyltransferase family. In terms of assembly, homotetramer. The cofactor is Mg(2+).

It is found in the cytoplasm. It catalyses the reaction IMP + diphosphate = hypoxanthine + 5-phospho-alpha-D-ribose 1-diphosphate. The enzyme catalyses GMP + diphosphate = guanine + 5-phospho-alpha-D-ribose 1-diphosphate. The protein operates within purine metabolism; IMP biosynthesis via salvage pathway; IMP from hypoxanthine: step 1/1. Converts guanine to guanosine monophosphate, and hypoxanthine to inosine monophosphate. Transfers the 5-phosphoribosyl group from 5-phosphoribosylpyrophosphate onto the purine. Plays a central role in the generation of purine nucleotides through the purine salvage pathway. The protein is Hypoxanthine-guanine phosphoribosyltransferase (Hprt1) of Mus spretus (Western Mediterranean mouse).